The chain runs to 105 residues: uncharacterized protein (105 aa).

It is found in the plastid. This is an uncharacterized protein from Euglena longa (Euglenophycean alga).